The sequence spans 695 residues: Lactotransferrin (695 aa).

An N-terminal signal peptide occupies residues 1-6 (LGLCLA). Transferrin-like domains follow at residues 12–339 (VRWC…NLRE) and 351–680 (VVWC…NLRR). 2 disulfide bridges follow: Cys-15–Cys-51 and Cys-25–Cys-42. Asp-66 provides a ligand contact to Fe(3+). Lys-79 is an active-site residue. Tyr-98 contributes to the Fe(3+) binding site. Cystine bridges form between Cys-121/Cys-204, Cys-163/Cys-179, Cys-166/Cys-189, Cys-176/Cys-187, and Cys-237/Cys-251. Thr-123, Arg-127, Ala-129, and Gly-130 together coordinate hydrogencarbonate. N-linked (GlcNAc...) asparagine glycosylation is present at Asn-143. Residue Tyr-198 coordinates Fe(3+). Residue His-259 participates in Fe(3+) binding. The active-site Nucleophile is Ser-265. An N-linked (GlcNAc...) asparagine glycan is attached at Asn-287. 2 cysteine pairs are disulfide-bonded: Cys-354–Cys-386 and Cys-364–Cys-377. Fe(3+) is bound at residue Asp-401. 8 cysteine pairs are disulfide-bonded: Cys-411–Cys-690, Cys-431–Cys-653, Cys-463–Cys-538, Cys-487–Cys-681, Cys-497–Cys-511, Cys-508–Cys-521, Cys-579–Cys-593, and Cys-631–Cys-636. Pro-436 lines the D-glucose pocket. Tyr-439 lines the Fe(3+) pocket. Hydrogencarbonate is bound by residues Thr-465, Arg-469, Ala-471, and Ala-472. Asn-482 is a glycosylation site (N-linked (GlcNAc...) asparagine). Residue Tyr-532 participates in Fe(3+) binding. Asn-600 is a binding site for D-glucose. His-601 lines the Fe(3+) pocket. Tyr-666 contacts D-glucose.

The protein belongs to the transferrin family. In terms of assembly, monomer. Found in a complex with LTF, CLU, EPPIN and SEMG1. Found in a complex with MPO and LTF; interacts directly with CP, allows Fe(3+) incorporation into LTF and activation of CP ferroxidase activity. Poly-N-acetyllactosaminic carbohydrate moiety seems to be needed for TLR4 activation.

The protein localises to the secreted. The protein resides in the cytoplasmic granule. Its function is as follows. Transferrins are iron binding transport proteins which can bind two Fe(3+) ions in association with the binding of an anion, usually bicarbonate. Major iron-binding and multifunctional protein found in exocrine fluids such as breast milk and mucosal secretions. Has antimicrobial activity, which depends on the extracellular cation concentration. Antimicrobial properties include bacteriostasis, which is related to its ability to sequester free iron and thus inhibit microbial growth, as well as direct bactericidal properties leading to the release of lipopolysaccharides from the bacterial outer membrane. Can also prevent bacterial biofilm development in P.aeruginosa infection. Has weak antifungal activity against C.albicans. Has anabolic, differentiating and anti-apoptotic effects on osteoblasts and can also inhibit osteoclastogenesis, possibly playing a role in the regulation of bone growth. Promotes binding of species C adenoviruses to epithelial cells, promoting adenovirus infection. Can inhibit papillomavirus infections. Stimulates the TLR4 signaling pathway leading to NF-kappa-B activation and subsequent pro-inflammatory cytokine production while also interfering with the lipopolysaccharide (LPS)-stimulated TLR4 signaling. Inhibits neutrophil granulocyte migration to sites of apoptosis, when secreted by apoptotic cells. Stimulates VEGFA-mediated endothelial cell migration and proliferation. Binds heparin, chondroitin sulfate and possibly other glycosaminoglycans (GAGs). Also binds specifically to pneumococcal surface protein A (PspA), the lipid A portion of bacterial lipopolysaccharide (LPS), lysozyme and DNA. In terms of biological role, lactoferricin binds to the bacterial surface and is crucial for the bactericidal functions. Has some antiviral activity against papillomavirus infection. N-terminal region shows strong antifungal activity against C.albicans. Contains two BBXB heparin-binding consensus sequences that appear to form the predominate functional GAG-binding site. Functionally, the lactotransferrin transferrin-like domain 1 functions as a serine protease of the peptidase S60 family that cuts arginine rich regions. This function contributes to the antimicrobial activity. Shows a preferential cleavage at -Arg-Ser-Arg-Arg-|- and -Arg-Arg-Ser-Arg-|-, and of Z-Phe-Arg-|-aminomethylcoumarin sites. The chain is Lactotransferrin (LTF) from Equus caballus (Horse).